The primary structure comprises 500 residues: Galactofuranose transporter ATP-binding protein YtfR (500 aa).

ABC transporter domains lie at 10-245 (LRTE…LGRE) and 259-497 (LSDK…IMNA). 42 to 49 (GENGAGKS) is an ATP binding site.

It belongs to the ABC transporter superfamily. In terms of assembly, the complex is composed of two ATP-binding proteins (YtfR), two transmembrane proteins (YtfT and YjfF) and a solute-binding protein (YtfQ).

The protein localises to the cell inner membrane. It catalyses the reaction D-galactofuranose(out) + ATP + H2O = D-galactofuranose(in) + ADP + phosphate + H(+). In terms of biological role, part of the ABC transporter complex YtfQRT-YjfF involved in galactofuranose transport. Responsible for energy coupling to the transport system. The sequence is that of Galactofuranose transporter ATP-binding protein YtfR (ytfR) from Escherichia coli O157:H7.